We begin with the raw amino-acid sequence, 621 residues long: uncharacterized protein (621 aa).

This sequence belongs to the chlamydial CPn_0512/CT_425/TC_0708 family.

This is an uncharacterized protein from Chlamydia muridarum (strain MoPn / Nigg).